Reading from the N-terminus, the 419-residue chain is 3-isopropylmalate dehydratase large subunit (419 aa).

3 residues coordinate [4Fe-4S] cluster: cysteine 300, cysteine 360, and cysteine 363.

This sequence belongs to the aconitase/IPM isomerase family. LeuC type 2 subfamily. As to quaternary structure, heterodimer of LeuC and LeuD. The cofactor is [4Fe-4S] cluster.

The catalysed reaction is (2R,3S)-3-isopropylmalate = (2S)-2-isopropylmalate. The protein operates within amino-acid biosynthesis; L-leucine biosynthesis; L-leucine from 3-methyl-2-oxobutanoate: step 2/4. Its function is as follows. Catalyzes the isomerization between 2-isopropylmalate and 3-isopropylmalate, via the formation of 2-isopropylmaleate. The protein is 3-isopropylmalate dehydratase large subunit of Acetivibrio thermocellus (strain ATCC 27405 / DSM 1237 / JCM 9322 / NBRC 103400 / NCIMB 10682 / NRRL B-4536 / VPI 7372) (Clostridium thermocellum).